Reading from the N-terminus, the 370-residue chain is Probable trehalose-phosphate phosphatase 6 (370 aa).

Belongs to the trehalose phosphatase family. It depends on a divalent metal cation as a cofactor.

The catalysed reaction is alpha,alpha-trehalose 6-phosphate + H2O = alpha,alpha-trehalose + phosphate. It participates in glycan biosynthesis; trehalose biosynthesis. Removes the phosphate from trehalose 6-phosphate to produce free trehalose. Trehalose accumulation in plant may improve abiotic stress tolerance. The polypeptide is Probable trehalose-phosphate phosphatase 6 (TPP6) (Oryza sativa subsp. japonica (Rice)).